The chain runs to 909 residues: Nitrate reductase [NADH] (909 aa).

C187 serves as a coordination point for Mo-molybdopterin. The 76-residue stretch at 535–610 (SKMYSMSEVK…LEDFRIGELI (76 aa)) folds into the Cytochrome b5 heme-binding domain. Heme contacts are provided by H570 and H593. Positions 652 to 764 (REKIPCKLVD…KGPLGHIEYQ (113 aa)) constitute an FAD-binding FR-type domain. FAD contacts are provided by residues 704–707 (RAYT), 721–725 (VVKIY), F726, F733, 738–740 (QMS), and T791.

Belongs to the nitrate reductase family. As to quaternary structure, homodimer. It depends on FAD as a cofactor. Heme is required as a cofactor. The cofactor is Mo-molybdopterin.

The enzyme catalyses nitrite + NAD(+) + H2O = nitrate + NADH + H(+). With respect to regulation, regulated by the nitrogen source and controlled by the circadian rhythm. Its function is as follows. Nitrate reductase is a key enzyme involved in the first step of nitrate assimilation in plants, fungi and bacteria. The polypeptide is Nitrate reductase [NADH] (NIA) (Petunia hybrida (Petunia)).